Consider the following 215-residue polypeptide: NADH-quinone oxidoreductase subunit C (215 aa).

This sequence belongs to the complex I 30 kDa subunit family. NDH-1 is composed of 14 different subunits. Subunits NuoB, C, D, E, F, and G constitute the peripheral sector of the complex.

The protein localises to the cell inner membrane. It catalyses the reaction a quinone + NADH + 5 H(+)(in) = a quinol + NAD(+) + 4 H(+)(out). Its function is as follows. NDH-1 shuttles electrons from NADH, via FMN and iron-sulfur (Fe-S) centers, to quinones in the respiratory chain. The immediate electron acceptor for the enzyme in this species is believed to be ubiquinone. Couples the redox reaction to proton translocation (for every two electrons transferred, four hydrogen ions are translocated across the cytoplasmic membrane), and thus conserves the redox energy in a proton gradient. The polypeptide is NADH-quinone oxidoreductase subunit C (Bordetella parapertussis (strain 12822 / ATCC BAA-587 / NCTC 13253)).